We begin with the raw amino-acid sequence, 232 residues long: E3 ubiquitin-protein ligase RNF125 (232 aa).

Polar residues predominate over residues 1–10 (MGSVLSTDSG). Residues 1–23 (MGSVLSTDSGKSAPASATARALE) are disordered. A lipid anchor (N-myristoyl glycine) is attached at G2. Residues C37 and C40 each coordinate Zn(2+). The segment at 37-76 (CAVCLEVLHQPVRTRCGHVFCRSCIATSLKNNKWTCPYCR) adopts an RING-type zinc-finger fold. An interaction with the C2HC RNF-type zinc finger region spans residues 43 to 45 (VLH). Residues C52, H54, C57, C60, C72, C75, C100, and C103 each coordinate Zn(2+). Residues 100–119 (CAECDTLVCLSEMRAHIRTC) form a C2HC RNF-type zinc finger. The segment at 109 to 113 (LSEMR) is interaction with the RING-type zinc finger. Positions 115 and 119 each coordinate Zn(2+). The linker region stretch occupies residues 120–128 (QKYIDKYGP). The segment at 210–224 (EEALIRRVLDRSLLE) is required for interaction with ubiquitin and for autoubiquitination.

As to quaternary structure, interacts with UBE2D1. Interacts with VCP/p97; leading to recruit RNF125 to RIGI and promote ubiquitination of RIGI. Autoubiquitinated, leading to its subsequent proteasomal degradation. Predominantly expressed in lymphoid tissues, including bone marrow, spleen and thymus. Also weakly expressed in other tissues. Predominant in the CD4(+) and CD8(+) T-cells, suggesting that it is preferentially confined to T-cells.

It localises to the golgi apparatus membrane. The catalysed reaction is S-ubiquitinyl-[E2 ubiquitin-conjugating enzyme]-L-cysteine + [acceptor protein]-L-lysine = [E2 ubiquitin-conjugating enzyme]-L-cysteine + N(6)-ubiquitinyl-[acceptor protein]-L-lysine.. Its pathway is protein modification; protein ubiquitination. Its function is as follows. E3 ubiquitin-protein ligase that mediates ubiquitination and subsequent proteasomal degradation of target proteins, such as RIGI, MAVS/IPS1, IFIH1/MDA5, JAK1 and p53/TP53. Acts as a negative regulator of type I interferon production by mediating ubiquitination of RIGI at 'Lys-181', leading to RIGI degradation. Mediates ubiquitination and subsequent degradation of p53/TP53. Mediates ubiquitination and subsequent degradation of JAK1. Acts as a positive regulator of T-cell activation. The sequence is that of E3 ubiquitin-protein ligase RNF125 from Homo sapiens (Human).